The primary structure comprises 101 residues: Small ribosomal subunit protein uS14 (101 aa).

It belongs to the universal ribosomal protein uS14 family. Part of the 30S ribosomal subunit. Contacts proteins S3 and S10.

Binds 16S rRNA, required for the assembly of 30S particles and may also be responsible for determining the conformation of the 16S rRNA at the A site. The sequence is that of Small ribosomal subunit protein uS14 from Vibrio campbellii (strain ATCC BAA-1116).